The sequence spans 353 residues: Rhodopsin (353 aa).

Over 1-36 the chain is Extracellular; sequence MNGTEGPYFYVPMVNTSGIVRSPYEYPQYYLVNPAA. N-linked (GlcNAc...) asparagine glycans are attached at residues asparagine 2 and asparagine 15. A helical membrane pass occupies residues 37-61; sequence YAALGAYMFLLILVGFPINFLTLYV. The Cytoplasmic segment spans residues 62-73; the sequence is TIEHKKLRTPLN. Residues 74-96 form a helical membrane-spanning segment; the sequence is YILLNLAVADLFMVFGGFTTTMY. The Extracellular portion of the chain corresponds to 97–110; that stretch reads TSMHGYFVLGRLGC. Residues cysteine 110 and cysteine 187 are joined by a disulfide bond. The helical transmembrane segment at 111-133 threads the bilayer; sequence NIEGFFATLGGEIALWSLVVLAI. A 'Ionic lock' involved in activated form stabilization motif is present at residues 134 to 136; the sequence is ERW. Topologically, residues 134 to 152 are cytoplasmic; the sequence is ERWVVVCKPISNFRFGENH. A helical transmembrane segment spans residues 153–173; that stretch reads AIMGLAFTWLMALACAAPPLV. At 174–202 the chain is on the extracellular side; it reads GWSRYIPEGMQCSCGIDYYTRAEGFNNES. The N-linked (GlcNAc...) asparagine glycan is linked to asparagine 200. Residues 203-224 traverse the membrane as a helical segment; that stretch reads FVIYMFICHFSIPLLVVFFCYG. At 225-252 the chain is on the cytoplasmic side; that stretch reads RLLCAVKEAAAAQQESETTQRAEREVTR. The helical transmembrane segment at 253 to 274 threads the bilayer; it reads MVIMMVIAFLVCWLPYASVAWW. The Extracellular segment spans residues 275 to 286; sequence IFTHQGSDFGPV. Residues 287–308 form a helical membrane-spanning segment; sequence FMTIPAFFAKSSSIYNPMIYIC. Lysine 296 carries the post-translational modification N6-(retinylidene)lysine. Over 309 to 353 the chain is Cytoplasmic; the sequence is LNKQFRHCMITTLCCGKNPFEEEEGASTASKTEASSVSSSSVSPA. 2 S-palmitoyl cysteine lipidation sites follow: cysteine 322 and cysteine 323. Residues 331–353 are disordered; sequence EEGASTASKTEASSVSSSSVSPA. Over residues 334–353 the composition is skewed to low complexity; that stretch reads ASTASKTEASSVSSSSVSPA.

Belongs to the G-protein coupled receptor 1 family. Opsin subfamily. In terms of processing, phosphorylated on some or all of the serine and threonine residues present in the C-terminal region. Contains one covalently linked retinal chromophore.

It is found in the membrane. It localises to the cell projection. The protein localises to the cilium. The protein resides in the photoreceptor outer segment. In terms of biological role, photoreceptor required for image-forming vision at low light intensity. While most salt water fish species use retinal as chromophore, most freshwater fish use 3-dehydroretinal, or a mixture of retinal and 3-dehydroretinal. Light-induced isomerization of 11-cis to all-trans retinal triggers a conformational change that activates signaling via G-proteins. Subsequent receptor phosphorylation mediates displacement of the bound G-protein alpha subunit by arrestin and terminates signaling. In Diplodus vulgaris (Common two-banded seabream), this protein is Rhodopsin (rho).